The following is a 206-amino-acid chain: Small ribosomal subunit protein uS4 (206 aa).

In terms of domain architecture, S4 RNA-binding spans 96 to 157; the sequence is CRLDNVVYRM…KCRNQLRIAQ (62 aa).

The protein belongs to the universal ribosomal protein uS4 family. Part of the 30S ribosomal subunit. Contacts protein S5. The interaction surface between S4 and S5 is involved in control of translational fidelity.

In terms of biological role, one of the primary rRNA binding proteins, it binds directly to 16S rRNA where it nucleates assembly of the body of the 30S subunit. Functionally, with S5 and S12 plays an important role in translational accuracy. This chain is Small ribosomal subunit protein uS4, found in Stutzerimonas stutzeri (strain A1501) (Pseudomonas stutzeri).